Here is a 414-residue protein sequence, read N- to C-terminus: Glucose-1-phosphate adenylyltransferase (414 aa).

Alpha-D-glucose 1-phosphate-binding positions include Tyr99, Gly164, 181–182 (EK), and Ser199.

The protein belongs to the bacterial/plant glucose-1-phosphate adenylyltransferase family. As to quaternary structure, homotetramer.

It catalyses the reaction alpha-D-glucose 1-phosphate + ATP + H(+) = ADP-alpha-D-glucose + diphosphate. It functions in the pathway glycan biosynthesis; glycogen biosynthesis. In terms of biological role, involved in the biosynthesis of ADP-glucose, a building block required for the elongation reactions to produce glycogen. Catalyzes the reaction between ATP and alpha-D-glucose 1-phosphate (G1P) to produce pyrophosphate and ADP-Glc. This chain is Glucose-1-phosphate adenylyltransferase, found in Bifidobacterium adolescentis (strain ATCC 15703 / DSM 20083 / NCTC 11814 / E194a).